A 444-amino-acid chain; its full sequence is ATP-dependent 6-phosphofructokinase 2 (444 aa).

At S55 the chain carries Phosphoserine. ATP is bound by residues G86, 149–150 (RG), and 174–177 (GDGT). D175 is a binding site for Mg(2+). Residues 203–205 (TVD), 248–250 (MGR), E304, and 362–365 (YMIR) each bind substrate. The Proton acceptor role is filled by D205.

Belongs to the phosphofructokinase type A (PFKA) family. PPi-dependent PFK group II subfamily. Atypical ATP-dependent clade 'X' sub-subfamily. As to quaternary structure, homotetramer. Mg(2+) is required as a cofactor. Mostly expressed in roots and stems.

It is found in the cytoplasm. The catalysed reaction is beta-D-fructose 6-phosphate + ATP = beta-D-fructose 1,6-bisphosphate + ADP + H(+). The protein operates within carbohydrate degradation; glycolysis; D-glyceraldehyde 3-phosphate and glycerone phosphate from D-glucose: step 3/4. Allosterically activated by AMP. Its function is as follows. Catalyzes the phosphorylation of D-fructose 6-phosphate to fructose 1,6-bisphosphate by ATP, the first committing step of glycolysis. The chain is ATP-dependent 6-phosphofructokinase 2 from Arabidopsis thaliana (Mouse-ear cress).